The primary structure comprises 307 residues: Nuclear polyadenylated RNA-binding protein nab2 (307 aa).

The interval 102–135 is disordered; it reads STDKSQQSFSVPETSIQPQSSQTPNITSLREEKE. Residues 105 to 129 are compositionally biased toward polar residues; the sequence is KSQQSFSVPETSIQPQSSQTPNITS. C3H1-type zinc fingers lie at residues 178-202, 217-232, and 254-268; these read TQEV…HPTP, CASG…VKGH, and CKYK…RFIH. Positions 274-307 are disordered; sequence NMTWRPPSKTEETSLSERSFAVNESEEQLHVPSV.

It belongs to the ZC3H14 family.

The protein resides in the nucleus. Its function is as follows. RNA-binding protein involved in RNA processing. Acts as a regulator of mRNA stability: binds to mRNAs and pre-mRNAs, preventing their degradation. Involved in the biogenesis of circular RNAs (circRNAs) which are produced by back-splicing circularization of pre-mRNAs. This chain is Nuclear polyadenylated RNA-binding protein nab2, found in Schizosaccharomyces pombe (strain 972 / ATCC 24843) (Fission yeast).